Consider the following 882-residue polypeptide: Alanine--tRNA ligase (882 aa).

Zn(2+) contacts are provided by His571, His575, Cys673, and His677.

This sequence belongs to the class-II aminoacyl-tRNA synthetase family. Zn(2+) is required as a cofactor.

It localises to the cytoplasm. It carries out the reaction tRNA(Ala) + L-alanine + ATP = L-alanyl-tRNA(Ala) + AMP + diphosphate. Catalyzes the attachment of alanine to tRNA(Ala) in a two-step reaction: alanine is first activated by ATP to form Ala-AMP and then transferred to the acceptor end of tRNA(Ala). Also edits incorrectly charged Ser-tRNA(Ala) and Gly-tRNA(Ala) via its editing domain. This chain is Alanine--tRNA ligase, found in Stenotrophomonas maltophilia (strain K279a).